A 588-amino-acid chain; its full sequence is L-fucose isomerase (588 aa).

Residues E335 and D359 each act as proton acceptor in the active site. Residues E335, D359, and H525 each coordinate Mn(2+).

Belongs to the L-fucose isomerase family. Requires Mn(2+) as cofactor.

Its subcellular location is the cytoplasm. The catalysed reaction is L-fucose = L-fuculose. Its pathway is carbohydrate degradation; L-fucose degradation; L-lactaldehyde and glycerone phosphate from L-fucose: step 1/3. Functionally, converts the aldose L-fucose into the corresponding ketose L-fuculose. The protein is L-fucose isomerase of Streptococcus pneumoniae (strain P1031).